Consider the following 494-residue polypeptide: Aldehyde dehydrogenase (494 aa).

Residue 223–228 (GSTTAG) coordinates NAD(+). Residues E245 and C279 contribute to the active site.

The protein belongs to the aldehyde dehydrogenase family.

It carries out the reaction an aldehyde + NAD(+) + H2O = a carboxylate + NADH + 2 H(+). Its pathway is mycotoxin biosynthesis. Functionally, aldehyde dehydrogenase; part of the gene cluster that mediates the biosynthesis of the selective antifungal agent ascochitine, an o-quinone methide that plays a possible protective role against other microbial competitors in nature and is considered to be important for pathogenicity of legume-associated Didymella species. The pathway probably begins with the synthesis of a keto-aldehyde intermediate by the ascochitine non-reducing polyketide synthase pksAC from successive condensations of 4 malonyl-CoA units, presumably with a simple acetyl-CoA starter unit. Release of the keto-aldehyde intermediate is consistent with the presence of the C-terminal reductive release domain. The HR-PKS (orf7) probably makes a diketide starter unit which is passed to the non-reducing polyketide synthase pksAC for further extension, producing ascochital and ascochitine. The aldehyde dehydrogenase (orf1), the 2-oxoglutarate-dependent dioxygenase (orf3) and the dehydrogenase (orf9) are probably involved in subsequent oxidations of methyl groups to the carboxylic acid of the heterocyclic ring. The ascochitine gene cluster also includes a gene encoding a short peptide with a cupin domain (orf2) that is often found in secondary metabolite gene clusters and which function has still to be determined. The protein is Aldehyde dehydrogenase of Didymella fabae (Leaf and pod spot disease fungus).